A 206-amino-acid polypeptide reads, in one-letter code: Ras-related protein RABH1a (206 aa).

Position 14–21 (14–21) interacts with GTP; it reads GDQGVGKT. The Effector region motif lies at 36 to 44; it reads YQATIGIDF. GTP-binding positions include 62–66, 120–123, and 150–151; these read DTAGQ, NKTD, and SA. 2 S-geranylgeranyl cysteine lipidation sites follow: Cys204 and Cys206. Cys206 carries the post-translational modification Cysteine methyl ester.

The protein belongs to the small GTPase superfamily. Rab family.

It is found in the golgi apparatus membrane. In terms of biological role, protein transport. Regulator of membrane traffic from the Golgi apparatus towards the endoplasmic reticulum (ER). This chain is Ras-related protein RABH1a (RABH1A), found in Arabidopsis thaliana (Mouse-ear cress).